We begin with the raw amino-acid sequence, 319 residues long: ATP-dependent 6-phosphofructokinase (319 aa).

Position 11 (glycine 11) interacts with ATP. 21–25 (RAVVR) contributes to the ADP binding site. ATP-binding positions include 72–73 (RY) and 102–105 (GDGS). Aspartate 103 contacts Mg(2+). 125 to 127 (TID) provides a ligand contact to substrate. Aspartate 127 acts as the Proton acceptor in catalysis. Arginine 154 is an ADP binding site. Substrate contacts are provided by residues arginine 162 and 169–171 (MGR). Residues 185–187 (GAE), arginine 211, and 213–215 (KKH) each bind ADP. Substrate is bound by residues glutamate 222, arginine 243, and 249 to 252 (HVQR).

Belongs to the phosphofructokinase type A (PFKA) family. ATP-dependent PFK group I subfamily. Prokaryotic clade 'B1' sub-subfamily. Homotetramer. The cofactor is Mg(2+).

It localises to the cytoplasm. It catalyses the reaction beta-D-fructose 6-phosphate + ATP = beta-D-fructose 1,6-bisphosphate + ADP + H(+). Its pathway is carbohydrate degradation; glycolysis; D-glyceraldehyde 3-phosphate and glycerone phosphate from D-glucose: step 3/4. With respect to regulation, allosterically activated by ADP and other diphosphonucleosides, and allosterically inhibited by phosphoenolpyruvate. Its function is as follows. Catalyzes the phosphorylation of D-fructose 6-phosphate to fructose 1,6-bisphosphate by ATP, the first committing step of glycolysis. This is ATP-dependent 6-phosphofructokinase from Listeria innocua serovar 6a (strain ATCC BAA-680 / CLIP 11262).